The sequence spans 166 residues: Large ribosomal subunit protein uL10 (166 aa).

This sequence belongs to the universal ribosomal protein uL10 family. In terms of assembly, part of the ribosomal stalk of the 50S ribosomal subunit. The N-terminus interacts with L11 and the large rRNA to form the base of the stalk. The C-terminus forms an elongated spine to which L12 dimers bind in a sequential fashion forming a multimeric L10(L12)X complex.

Forms part of the ribosomal stalk, playing a central role in the interaction of the ribosome with GTP-bound translation factors. The sequence is that of Large ribosomal subunit protein uL10 from Streptococcus pneumoniae (strain 70585).